Reading from the N-terminus, the 129-residue chain is Phosphoribosyl-AMP cyclohydrolase (129 aa).

Asp-86 provides a ligand contact to Mg(2+). Residue Cys-87 coordinates Zn(2+). 2 residues coordinate Mg(2+): Asp-88 and Asp-90. Zn(2+) is bound by residues Cys-104 and Cys-111.

Belongs to the PRA-CH family. In terms of assembly, homodimer. It depends on Mg(2+) as a cofactor. Requires Zn(2+) as cofactor.

It localises to the cytoplasm. The catalysed reaction is 1-(5-phospho-beta-D-ribosyl)-5'-AMP + H2O = 1-(5-phospho-beta-D-ribosyl)-5-[(5-phospho-beta-D-ribosylamino)methylideneamino]imidazole-4-carboxamide. It functions in the pathway amino-acid biosynthesis; L-histidine biosynthesis; L-histidine from 5-phospho-alpha-D-ribose 1-diphosphate: step 3/9. Functionally, catalyzes the hydrolysis of the adenine ring of phosphoribosyl-AMP. The sequence is that of Phosphoribosyl-AMP cyclohydrolase from Ignicoccus hospitalis (strain KIN4/I / DSM 18386 / JCM 14125).